The sequence spans 295 residues: Glutamyl-Q tRNA(Asp) synthetase (295 aa).

L-glutamate is bound by residues 5–9 (RFAPS) and E41. Residues 8–18 (PSPTGLLHIGS) carry the 'HIGH' region motif. Residues C97, C99, Y117, and C121 each contribute to the Zn(2+) site. The L-glutamate site is built by Y178 and R196. The short motif at 234–238 (KWSKQ) is the 'KMSKS' region element. K237 serves as a coordination point for ATP.

Belongs to the class-I aminoacyl-tRNA synthetase family. GluQ subfamily. Zn(2+) is required as a cofactor.

In terms of biological role, catalyzes the tRNA-independent activation of glutamate in presence of ATP and the subsequent transfer of glutamate onto a tRNA(Asp). Glutamate is transferred on the 2-amino-5-(4,5-dihydroxy-2-cyclopenten-1-yl) moiety of the queuosine in the wobble position of the QUC anticodon. The sequence is that of Glutamyl-Q tRNA(Asp) synthetase from Neisseria meningitidis serogroup C / serotype 2a (strain ATCC 700532 / DSM 15464 / FAM18).